Reading from the N-terminus, the 209-residue chain is Ribosomal RNA large subunit methyltransferase E (209 aa).

Positions 63, 65, 83, 99, and 124 each coordinate S-adenosyl-L-methionine. Lys-164 (proton acceptor) is an active-site residue.

The protein belongs to the class I-like SAM-binding methyltransferase superfamily. RNA methyltransferase RlmE family.

The protein localises to the cytoplasm. The catalysed reaction is uridine(2552) in 23S rRNA + S-adenosyl-L-methionine = 2'-O-methyluridine(2552) in 23S rRNA + S-adenosyl-L-homocysteine + H(+). In terms of biological role, specifically methylates the uridine in position 2552 of 23S rRNA at the 2'-O position of the ribose in the fully assembled 50S ribosomal subunit. The polypeptide is Ribosomal RNA large subunit methyltransferase E (Sodalis glossinidius (strain morsitans)).